A 340-amino-acid polypeptide reads, in one-letter code: 4-hydroxy-3-methylbut-2-enyl diphosphate reductase (340 aa).

Cysteine 18 contributes to the [4Fe-4S] cluster binding site. (2E)-4-hydroxy-3-methylbut-2-enyl diphosphate is bound by residues histidine 47 and histidine 83. Histidine 47 and histidine 83 together coordinate dimethylallyl diphosphate. Positions 47 and 83 each coordinate isopentenyl diphosphate. [4Fe-4S] cluster is bound at residue cysteine 105. Histidine 133 provides a ligand contact to (2E)-4-hydroxy-3-methylbut-2-enyl diphosphate. Residue histidine 133 coordinates dimethylallyl diphosphate. Histidine 133 contacts isopentenyl diphosphate. Catalysis depends on glutamate 135, which acts as the Proton donor. Position 174 (threonine 174) interacts with (2E)-4-hydroxy-3-methylbut-2-enyl diphosphate. Cysteine 204 is a binding site for [4Fe-4S] cluster. Serine 232, serine 233, asparagine 234, and serine 277 together coordinate (2E)-4-hydroxy-3-methylbut-2-enyl diphosphate. Dimethylallyl diphosphate contacts are provided by serine 232, serine 233, asparagine 234, and serine 277. Residues serine 232, serine 233, asparagine 234, and serine 277 each contribute to the isopentenyl diphosphate site.

This sequence belongs to the IspH family. [4Fe-4S] cluster is required as a cofactor.

The catalysed reaction is isopentenyl diphosphate + 2 oxidized [2Fe-2S]-[ferredoxin] + H2O = (2E)-4-hydroxy-3-methylbut-2-enyl diphosphate + 2 reduced [2Fe-2S]-[ferredoxin] + 2 H(+). It catalyses the reaction dimethylallyl diphosphate + 2 oxidized [2Fe-2S]-[ferredoxin] + H2O = (2E)-4-hydroxy-3-methylbut-2-enyl diphosphate + 2 reduced [2Fe-2S]-[ferredoxin] + 2 H(+). Its pathway is isoprenoid biosynthesis; dimethylallyl diphosphate biosynthesis; dimethylallyl diphosphate from (2E)-4-hydroxy-3-methylbutenyl diphosphate: step 1/1. The protein operates within isoprenoid biosynthesis; isopentenyl diphosphate biosynthesis via DXP pathway; isopentenyl diphosphate from 1-deoxy-D-xylulose 5-phosphate: step 6/6. In terms of biological role, catalyzes the conversion of 1-hydroxy-2-methyl-2-(E)-butenyl 4-diphosphate (HMBPP) into a mixture of isopentenyl diphosphate (IPP) and dimethylallyl diphosphate (DMAPP). Acts in the terminal step of the DOXP/MEP pathway for isoprenoid precursor biosynthesis. In Bartonella quintana (strain Toulouse) (Rochalimaea quintana), this protein is 4-hydroxy-3-methylbut-2-enyl diphosphate reductase.